A 632-amino-acid chain; its full sequence is ATP-dependent zinc metalloprotease FtsH (632 aa).

Residues 1-9 (MKPTNEPKK) lie on the Cytoplasmic side of the membrane. The chain crosses the membrane as a helical span at residues 10–30 (PFFQSPIVLAVLGGILLIFFL). Topologically, residues 31–116 (RSFNSDGSFS…INYSGFSESN (86 aa)) are periplasmic. The helical transmembrane segment at 117–137 (FFTDMLGWLMPILVILGLWMF) threads the bilayer. The Cytoplasmic portion of the chain corresponds to 138 to 632 (MANRMQKNMG…RLIPLEEQAS (495 aa)). Position 210-217 (210-217 (GPPGTGKT)) interacts with ATP. His434 lines the Zn(2+) pocket. Residue Glu435 is part of the active site. Residues His438 and Asp511 each contribute to the Zn(2+) site.

This sequence in the central section; belongs to the AAA ATPase family. It in the C-terminal section; belongs to the peptidase M41 family. As to quaternary structure, homohexamer. It depends on Zn(2+) as a cofactor.

Its subcellular location is the cell inner membrane. In terms of biological role, acts as a processive, ATP-dependent zinc metallopeptidase for both cytoplasmic and membrane proteins. Plays a role in the quality control of integral membrane proteins. The protein is ATP-dependent zinc metalloprotease FtsH of Helicobacter pylori (strain J99 / ATCC 700824) (Campylobacter pylori J99).